Here is a 650-residue protein sequence, read N- to C-terminus: MSEAHIYPVKENIKAHTHADNDTYLAMYQQSVTDPEGFWSEHGKIVDWIKPFTKVKQTSFDTGHVDIRWFEDGTLNVSANCIDRHLAERGDDVAIIWEGDNPADDKTLTYNELYTEVCRFSNALKEQGVRKGDVVCLYMPMVPEAAVAMLACTRIGAVHTIVFGGFSPEALAGRIIDSDAKVVITADEGVRGGRAVPLKKNVDEALTNPEVKTISKVVVFKRTGGNIDWHEHRDVWWHEATAKVSDVCPPEEMKAEDPLFILYTSGSTGKPKGVLHTTGGYLVYATMTFKYVFDYQPGETFWCTADVGWITGHTYLVYGPLANGAKTILFEGVPNYPNTSRMSEVVDKHQVNILYTAPTAIRALMAKGNEAIEGTDRSSLRIMGSVGEPINPEAWEWYYKTIGNEKSPIVDTWWQTETGGILITPLPGATALKPGSATRPFFGVQPALVDNMGNVIEDQAAEGNLVILDSWPGQMRTVYGDHERFEQTYFSTFKGMYFTGDGARRDEDGYYWITGRVDDVLNVSGHRMGTAEIESALVAHPKIAEAAIVGIPHDIKGQAIYAYVTLNAGEYPTAELHKEVKDWVRKEIGPIATPDVLHWTDALPKTRSGKIMRRILRKIATGDTSNLGDTSTLADPSVVDKLIAEKAELV.

CoA contacts are provided by residues 191-194 (RGGR), Thr311, and Asn335. ATP contacts are provided by residues 387–389 (GEP), 411–416 (DTWWQT), Asp501, and Arg516. Ser524 contributes to the CoA binding site. Arg527 lines the ATP pocket. Residues Val538, His540, and Ile543 each contribute to the Mg(2+) site. CoA is bound at residue Arg585. At Lys610 the chain carries N6-acetyllysine.

This sequence belongs to the ATP-dependent AMP-binding enzyme family. It depends on Mg(2+) as a cofactor. In terms of processing, acetylated. Deacetylation by the SIR2-homolog deacetylase activates the enzyme.

The enzyme catalyses acetate + ATP + CoA = acetyl-CoA + AMP + diphosphate. Catalyzes the conversion of acetate into acetyl-CoA (AcCoA), an essential intermediate at the junction of anabolic and catabolic pathways. AcsA undergoes a two-step reaction. In the first half reaction, AcsA combines acetate with ATP to form acetyl-adenylate (AcAMP) intermediate. In the second half reaction, it can then transfer the acetyl group from AcAMP to the sulfhydryl group of CoA, forming the product AcCoA. The chain is Acetyl-coenzyme A synthetase from Vibrio vulnificus (strain YJ016).